A 341-amino-acid chain; its full sequence is Cyclin-Y (341 aa).

A lipid anchor (N-myristoyl glycine) is attached at G2. Phosphoserine occurs at positions 21 and 25. Phosphothreonine is present on T30. S33 carries the post-translational modification Phosphoserine. Residue T37 is modified to Phosphothreonine. T67 carries the phosphothreonine; by CDK14 modification. Phosphoserine; by CDK14 is present on residues S71 and S73. T75 is subject to Phosphothreonine. Position 83 is a phosphoserine; by CDK14 (S83). A phosphoserine mark is found at S99, S100, and S102. A Cyclin N-terminal domain is found at 143 to 265; the sequence is DIFDENLHPL…FLELLQFNIN (123 aa). Residue S280 is modified to Phosphoserine. Phosphoserine; by CDK14 occurs at positions 288 and 295. A phosphoserine mark is found at S324 and S326. Residue T331 is modified to Phosphothreonine.

The protein belongs to the cyclin family. Cyclin Y subfamily. In terms of assembly, found in a complex with CAPRIN2, LRP6 and CDK14 during G2/M stage; CAPRIN2 functions as a scaffold for the complex by binding to CCNY via its N terminus and to CDK14 via its C terminus. Interacts with CDK14. Interacts with CDK16. Interacts with LRP6. Ubiquitinated; leading to its degradation. Post-translationally, heavily phosphorylated. Phosphorylation at Ser-71 and Ser-73 by CDK14 is enhanced during the G2 and M cell cycle phases, and creates a phosphodegron triggering SCF-dependent ubiquitination. In terms of tissue distribution, widely expressed.

The protein resides in the cell membrane. The protein localises to the nucleus. Positive regulatory subunit of the cyclin-dependent kinases CDK14/PFTK1 and CDK16. Acts as a cell-cycle regulator of Wnt signaling pathway during G2/M phase by recruiting CDK14/PFTK1 to the plasma membrane and promoting phosphorylation of LRP6, leading to the activation of the Wnt signaling pathway. Recruits CDK16 to the plasma membrane. Isoform 3 might play a role in the activation of MYC-mediated transcription. This Homo sapiens (Human) protein is Cyclin-Y (CCNY).